The sequence spans 569 residues: Arylsulfatase I (569 aa).

A signal peptide spans 1-23 (MHTLTGFSLVSLLSFGYLSWDWA). Residues Asp55, Asp56, and Cys93 each contribute to the Ca(2+) site. The Nucleophile role is filled by Cys93. Cys93 is subject to 3-oxoalanine (Cys). Position 147 (Lys147) interacts with substrate. Residue His149 is part of the active site. Substrate is bound at residue His239. N-linked (GlcNAc...) asparagine glycosylation is found at Asn276 and Asn288. The Ca(2+) site is built by Asp297 and Asn298. Residue Lys315 coordinates substrate. N-linked (GlcNAc...) asparagine glycosylation is found at Asn466 and Asn496. The disordered stretch occupies residues 510 to 539 (RAHPDFNGGAWGPWASDEEEEEEEGRARSF).

Belongs to the sulfatase family. Ca(2+) serves as cofactor. Post-translationally, the oxidation of Cys-93 residue to 3-oxoalanine (also known as C(alpha)-formylglycine) by SUMF1/Sulfatase-modifying factor 1, seems critical for catalytic activity. As to expression, expressed in placenta, in embryonic stem cells, fetal eyes and lens.

It is found in the secreted. The protein localises to the endoplasmic reticulum. Its function is as follows. Displays arylsulfatase activity at neutral pH, when co-expressed with SUMF1; arylsulfatase activity is measured in the secretion medium of retinal cell line, but no activity is recorded when measured in cell extracts. Lacks arylsulfatase activity. The sequence is that of Arylsulfatase I (ARSI) from Homo sapiens (Human).